We begin with the raw amino-acid sequence, 271 residues long: 3-methyl-2-oxobutanoate hydroxymethyltransferase (271 aa).

2 residues coordinate Mg(2+): D49 and D88. Residues 49–50, D88, and K118 each bind 3-methyl-2-oxobutanoate; that span reads DS. E120 contributes to the Mg(2+) binding site. E187 functions as the Proton acceptor in the catalytic mechanism.

It belongs to the PanB family. Homodecamer; pentamer of dimers. Mg(2+) serves as cofactor.

Its subcellular location is the cytoplasm. It catalyses the reaction 3-methyl-2-oxobutanoate + (6R)-5,10-methylene-5,6,7,8-tetrahydrofolate + H2O = 2-dehydropantoate + (6S)-5,6,7,8-tetrahydrofolate. The protein operates within cofactor biosynthesis; (R)-pantothenate biosynthesis; (R)-pantoate from 3-methyl-2-oxobutanoate: step 1/2. Catalyzes the reversible reaction in which hydroxymethyl group from 5,10-methylenetetrahydrofolate is transferred onto alpha-ketoisovalerate to form ketopantoate. The sequence is that of 3-methyl-2-oxobutanoate hydroxymethyltransferase from Bartonella bacilliformis (strain ATCC 35685 / KC583 / Herrer 020/F12,63).